Reading from the N-terminus, the 583-residue chain is MASKAAPSCRLVFCLLISATVLRPGLGWYTVNSAYGDTIIMPCRVDVPQNLMFGKWKYEKPDGSPVFIAFRSSTKKSVQYDDVPEYKDRLNLSENYTLSISNAKISDEKRFVCMLVTEDDVFEAPTVVKVFKQPSKPEIVSKAPFLETDKLKKLGECISKDSYPDGNITWYRNGKVLQALEGAVVIIFRKQMDSVTQLYTMTSSLEYKTTKADIQMPFTCSVTYYGPSGQKTVYSEQAVFDIYYPTEQVTIQVLPSKNAIKEGDNITLKCLGNGNPPPEEFLFYLPGQPEGIRSSNTYTLTDVKRNATGDYKCSLVDKKSMIASAAITVHYLDLSLNPSGEVTKQIGDALPVSCTISASRNATVVWMKDNVKLRSSPSFSSLHYQDAGNYVCETALQEVEGLKKRESLTLIVEGKPQIKMTKKTDPSGLSKTIICHVEGFPKPAIQWTITGSGSVINQTEESPYINGRYYSKIIISPEENVTLTCTAENQLERTVNSLNVSAISIPEHDEADEISDENKEKVNDQAKLIVGIVVGLLLAALVAGVVYWLYMKKSKTASKHVNKDLGNMEENKKLEENNHKTEA.

An N-terminal signal peptide occupies residues 1 to 27 (MASKAAPSCRLVFCLLISATVLRPGLG). 2 consecutive Ig-like V-type domains span residues 28 to 120 (WYTV…TEDD) and 125 to 234 (PTVV…KTVY). At 28-527 (WYTVNSAYGD…NKEKVNDQAK (500 aa)) the chain is on the extracellular side. 2 cysteine pairs are disulfide-bonded: cysteine 43–cysteine 113 and cysteine 157–cysteine 220. N-linked (GlcNAc...) asparagine glycosylation is found at asparagine 91, asparagine 95, asparagine 167, asparagine 265, asparagine 306, asparagine 361, asparagine 457, asparagine 480, and asparagine 499. 3 Ig-like C2-type domains span residues 245 to 328 (PTEQ…AAIT), 333 to 409 (DLSL…ESLT), and 416 to 501 (PQIK…LNVS). Cystine bridges form between cysteine 270–cysteine 313, cysteine 354–cysteine 392, and cysteine 435–cysteine 485. Residues 528 to 549 (LIVGIVVGLLLAALVAGVVYWL) form a helical membrane-spanning segment. Over 550–583 (YMKKSKTASKHVNKDLGNMEENKKLEENNHKTEA) the chain is Cytoplasmic. Residues 562–583 (NKDLGNMEENKKLEENNHKTEA) form a disordered region. Basic and acidic residues predominate over residues 569-583 (EENKKLEENNHKTEA).

In terms of assembly, homodimer. Interacts (via extracellular domain) with CD6 (via extracellular domain). Homodimerization and interaction with CD6 involve the same region and cannot occur simultaneously. The affinity for CD6 is much higher than the affinity for self-association. Interacts (via glycosylated extracellular domain) with LGALS1 and LGALS3. Interaction with LGALS1 or LGALS3 inhibits interaction with CD6. Glycosylated. Constitutively expressed in the autonomic nervous system. Sympathetic and parasympathetic nerve fibers but not myelinated nerve fibers in the spinal nerve.

Its subcellular location is the cell membrane. It localises to the cell projection. The protein resides in the axon. It is found in the dendrite. Functionally, cell adhesion molecule that mediates both heterotypic cell-cell contacts via its interaction with CD6, as well as homotypic cell-cell contacts. Promotes T-cell activation and proliferation via its interactions with CD6. Contributes to the formation and maturation of the immunological synapse via its interactions with CD6. Mediates homotypic interactions with cells that express ALCAM. Mediates attachment of dendritic cells onto endothelial cells via homotypic interaction. Inhibits endothelial cell migration and promotes endothelial tube formation via homotypic interactions. Required for normal organization of the lymph vessel network. Required for normal hematopoietic stem cell engraftment in the bone marrow. Plays a role in hematopoiesis; required for normal numbers of hematopoietic stem cells in bone marrow. Promotes in vitro osteoblast proliferation and differentiation. Promotes neurite extension, axon growth and axon guidance; axons grow preferentially on surfaces that contain ALCAM. Mediates outgrowth and pathfinding for retinal ganglion cell axons. The sequence is that of CD166 antigen (ALCAM) from Bos taurus (Bovine).